The following is a 280-amino-acid chain: F420-dependent methylenetetrahydromethanopterin dehydrogenase (280 aa).

Belongs to the MTD family.

It carries out the reaction 5,10-methylenetetrahydromethanopterin + oxidized coenzyme F420-(gamma-L-Glu)(n) + 2 H(+) = 5,10-methenyl-5,6,7,8-tetrahydromethanopterin + reduced coenzyme F420-(gamma-L-Glu)(n). Its pathway is one-carbon metabolism; methanogenesis from CO(2); 5,10-methylene-5,6,7,8-tetrahydromethanopterin from 5,10-methenyl-5,6,7,8-tetrahydromethanopterin (coenzyme F420 route): step 1/1. Functionally, catalyzes the reversible reduction of methenyl-H(4)MPT(+) to methylene-H(4)MPT. This chain is F420-dependent methylenetetrahydromethanopterin dehydrogenase, found in Methanocorpusculum labreanum (strain ATCC 43576 / DSM 4855 / Z).